A 501-amino-acid chain; its full sequence is Mitochondrial inner membrane i-AAA protease supercomplex subunit MGR3 (501 aa).

Residues 1 to 77 (MLLQGMRLSQ…PKPNLKKKNR (77 aa)) are Mitochondrial matrix-facing. The tract at residues 39-72 (RPPASNFNTQESAPIPESPANSPTRPQMAPKPNL) is disordered. A helical membrane pass occupies residues 78–95 (SLMYSIIGVSIVGLYFWF). Residues 96–501 (KSNSRKQKLP…LKAAKKEGLN (406 aa)) lie on the Mitochondrial intermembrane side of the membrane. TPR repeat units lie at residues 109–144 (QKVW…CDRS), 154–187 (TRIE…FFEA), 386–420 (GTYI…AKRN), and 440–473 (ALST…AKET).

It belongs to the MGR3 family. Component of the mitochondrial inner membrane i-AAA protease supercomplex composed of MGR1, MGR3 and YME1. With MGR1, forms a subcomplex that binds to YME1 and to substrates to facilitate proteolysis.

The protein localises to the mitochondrion inner membrane. In terms of biological role, component of the mitochondrial inner membrane i-AAA protease supercomplex, which degrades misfolded mitochondrial proteins. Together with MGR1, functions in an adapter complex that targets substrates to the i-AAA protease for degradation. Required for growth of cells lacking the mitochondrial genome. This chain is Mitochondrial inner membrane i-AAA protease supercomplex subunit MGR3 (MGR3), found in Saccharomyces cerevisiae (strain ATCC 204508 / S288c) (Baker's yeast).